A 163-amino-acid chain; its full sequence is MSDKAAGETKNGNGATTEPSLNILAQYVKDLSFESPGAPLSLRPREKAPSININVNVNANPLSETDFDVVLTLEAKAVDGKDILFNTELVYGGVFRIQGIPQEHMLPLLFIECPRLLFPFARQIIADATRNGGYPPLMIDPIDFAQMFQQRMAEEQAESAVKS.

The protein belongs to the SecB family. As to quaternary structure, homotetramer, a dimer of dimers. One homotetramer interacts with 1 SecA dimer.

The protein resides in the cytoplasm. In terms of biological role, one of the proteins required for the normal export of preproteins out of the cell cytoplasm. It is a molecular chaperone that binds to a subset of precursor proteins, maintaining them in a translocation-competent state. It also specifically binds to its receptor SecA. This chain is Protein-export protein SecB, found in Brucella canis (strain ATCC 23365 / NCTC 10854 / RM-666).